The following is a 325-amino-acid chain: Beta-ketoacyl-[acyl-carrier-protein] synthase III (325 aa).

Active-site residues include Cys-119 and His-252. The interval 253-257 (QANIR) is ACP-binding. Asn-282 is a catalytic residue.

Belongs to the thiolase-like superfamily. FabH family. Homodimer.

Its subcellular location is the cytoplasm. It carries out the reaction malonyl-[ACP] + acetyl-CoA + H(+) = 3-oxobutanoyl-[ACP] + CO2 + CoA. It participates in lipid metabolism; fatty acid biosynthesis. Its function is as follows. Catalyzes the condensation reaction of fatty acid synthesis by the addition to an acyl acceptor of two carbons from malonyl-ACP. Catalyzes the first condensation reaction which initiates fatty acid synthesis and may therefore play a role in governing the total rate of fatty acid production. Possesses both acetoacetyl-ACP synthase and acetyl transacylase activities. Its substrate specificity determines the biosynthesis of branched-chain and/or straight-chain of fatty acids. The chain is Beta-ketoacyl-[acyl-carrier-protein] synthase III from Variovorax paradoxus (strain S110).